The chain runs to 521 residues: Tetratricopeptide repeat and J domain-containing co-chaperone DNJ1 (521 aa).

An N-terminal signal peptide occupies residues 1 to 21 (MHLNLAGLAVAATAFLATASA). TPR repeat units follow at residues 33–66 (VSNL…DPTN), 67–100 (YLSL…KPGF), 102–134 (GAHL…PKSA), 176–209 (PHLR…KPGD), 211–244 (SPHI…DPDS), 315–348 (LENL…NPDS), and 349–382 (FWGL…RPDQ). In terms of domain architecture, J spans 404–473 (DYYKVLGVEN…ELRARFDRGD (70 aa)). A compositionally biased stretch (basic and acidic residues) spans 464–474 (ELRARFDRGDD). A disordered region spans residues 464-521 (ELRARFDRGDDPNSQERPNPFQGQGNPFGGGHPFMFQQGGGGGGPNIKFQFGGQPFGF). Positions 489–508 (NPFGGGHPFMFQQGGGGGGP) are enriched in gly residues. Residues 509 to 521 (NIKFQFGGQPFGF) show a composition bias toward low complexity.

It is found in the endoplasmic reticulum lumen. Endoplasmic reticulum co-chaperone required for the of virulence factors such as PG1, the major endopolygalacturonase produced during the infection of tomato plants. In Fusarium oxysporum f. sp. lycopersici (strain 4287 / CBS 123668 / FGSC 9935 / NRRL 34936) (Fusarium vascular wilt of tomato), this protein is Tetratricopeptide repeat and J domain-containing co-chaperone DNJ1.